A 74-amino-acid polypeptide reads, in one-letter code: U6-agatoxin-Ao1a (74 aa).

The N-terminal stretch at 1-19 is a signal peptide; sequence MRFYIAFFFLLLAADMALS. The propeptide occupies 20–30; it reads FEIGNSEELER. 3 disulfides stabilise this stretch: cysteine 44/cysteine 56, cysteine 49/cysteine 61, and cysteine 55/cysteine 72.

As to expression, expressed by the venom gland.

The protein resides in the secreted. The sequence is that of U6-agatoxin-Ao1a from Agelena orientalis (Funnel-web spider).